A 249-amino-acid polypeptide reads, in one-letter code: Probable transcriptional regulatory protein Sare_1779 (249 aa).

Belongs to the TACO1 family.

The protein resides in the cytoplasm. The sequence is that of Probable transcriptional regulatory protein Sare_1779 from Salinispora arenicola (strain CNS-205).